The following is a 631-amino-acid chain: Probable electron transfer flavoprotein-ubiquinone oxidoreductase, mitochondrial (631 aa).

Valine 65–isoleucine 79 is an FAD binding site. Residues cysteine 574, cysteine 600, cysteine 603, and cysteine 606 each contribute to the [4Fe-4S] cluster site. The 30-residue stretch at threonine 591–proline 620 folds into the 4Fe-4S ferredoxin-type domain.

It belongs to the ETF-QO/FixC family. Requires [4Fe-4S] cluster as cofactor. It depends on FAD as a cofactor.

It is found in the mitochondrion inner membrane. It catalyses the reaction a ubiquinone + reduced [electron-transfer flavoprotein] = a ubiquinol + oxidized [electron-transfer flavoprotein] + H(+). Functionally, accepts electrons from ETF and reduces ubiquinone. The sequence is that of Probable electron transfer flavoprotein-ubiquinone oxidoreductase, mitochondrial (CIR2) from Saccharomyces cerevisiae (strain ATCC 204508 / S288c) (Baker's yeast).